A 162-amino-acid polypeptide reads, in one-letter code: Caveolin-2 (162 aa).

The Cytoplasmic portion of the chain corresponds to 1-86 (MGLETEKADV…FEISKYVMYK (86 aa)). Residue tyrosine 19 is modified to Phosphotyrosine; by SRC. 2 positions are modified to phosphoserine: serine 20 and serine 23. A Phosphotyrosine; by SRC modification is found at tyrosine 27. A Phosphoserine modification is found at serine 36. The segment at residues 87-107 (FLTVFLSIPLAFLAGILFATL) is an intramembrane region (helical). Residues 108–162 (SCLHIWIIMPFVKTCLMVLPSVQTIWKSVTDAIIAPLCTSIGRSFSSVSLQLSHD) are Cytoplasmic-facing.

This sequence belongs to the caveolin family. In terms of assembly, monomer or homodimer. Interacts with CAV1; the interaction forms a stable heterooligomeric complex that is required for targeting to lipid rafts and for caveolae formation. Tyrosine phosphorylated forms do not form heterooligomers with the Tyr-19-phosphorylated form existing as a monomer or dimer, and the Tyr-27-form as a monomer only. Interacts (tyrosine phosphorylated form) with the SH2 domain-containing proteins, RASA1, NCK1 and SRC. Interacts (tyrosine phosphorylated form) with INSR, the interaction (Tyr-27-phosphorylated form) is increased on insulin stimulation. Interacts (Tyr-19 phosphorylated form) with MAPK1 (phosphorylated form); the interaction, promoted by insulin, leads to nuclear location and MAPK1 activation. Interacts with STAT3; the interaction is increased on insulin-induced tyrosine phosphorylation leading to STAT activation. Post-translationally, phosphorylated on serine and tyrosine residues. CAV1 promotes phosphorylation on Ser-23 which then targets the complex to the plasma membrane, lipid rafts and caveolae. Phosphorylation on Ser-36 appears to modulate mitosis in endothelial cells. Phosphorylation on both Tyr-19 and Tyr-27 is required for insulin-induced 'Ser-727' phosphorylation of STAT3 and its activation. Phosphorylation on Tyr-19 is required for insulin-induced phosphorylation of MAPK1 and DNA binding of STAT3. Tyrosine phosphorylation is induced by both EGF and insulin (By. similarity).

It is found in the nucleus. It localises to the cytoplasm. Its subcellular location is the golgi apparatus membrane. The protein resides in the cell membrane. The protein localises to the membrane. It is found in the caveola. Functionally, may act as a scaffolding protein within caveolar membranes. Interacts directly with G-protein alpha subunits and can functionally regulate their activity. Acts as an accessory protein in conjunction with CAV1 in targeting to lipid rafts and driving caveolae formation. The Ser-36 phosphorylated form has a role in modulating mitosis in endothelial cells. Positive regulator of cellular mitogenesis of the MAPK signaling pathway. Required for the insulin-stimulated nuclear translocation and activation of MAPK1 and STAT3, and the subsequent regulation of cell cycle progression. The polypeptide is Caveolin-2 (CAV2) (Saimiri boliviensis boliviensis (Bolivian squirrel monkey)).